The following is a 121-amino-acid chain: Large ribosomal subunit protein bL12 (121 aa).

This sequence belongs to the bacterial ribosomal protein bL12 family. In terms of assembly, homodimer. Part of the ribosomal stalk of the 50S ribosomal subunit. Forms a multimeric L10(L12)X complex, where L10 forms an elongated spine to which 2 to 4 L12 dimers bind in a sequential fashion. Binds GTP-bound translation factors.

Functionally, forms part of the ribosomal stalk which helps the ribosome interact with GTP-bound translation factors. Is thus essential for accurate translation. The protein is Large ribosomal subunit protein bL12 of Tolumonas auensis (strain DSM 9187 / NBRC 110442 / TA 4).